Here is a 630-residue protein sequence, read N- to C-terminus: A-type voltage-gated potassium channel KCND2 (630 aa).

At 1-184 the chain is on the cytoplasmic side; the sequence is MAAGVAAWLP…FENPHTSTMA (184 aa). An interaction with KCNIP1, KCNIP2, and other family members region spans residues 2–20; sequence AAGVAAWLPFARAAAIGWM. Phosphothreonine is present on Thr-38. The tract at residues 71 to 90 is interaction with KCNIP1; it reads ERDFFYHPETQQYFFDRDPD. Zn(2+) is bound by residues His-105, Cys-111, Cys-132, and Cys-133. Residues 185–206 form a helical membrane-spanning segment; the sequence is LVFYYVTGFFIAVSVIANVVET. The Extracellular portion of the chain corresponds to 207–226; sequence VPCGSSPGHIKELPCGERYA. The chain crosses the membrane as a helical span at residues 227–249; that stretch reads VAFFCLDTACVMIFTVEYLLRLA. The Cytoplasmic portion of the chain corresponds to 250–256; sequence AAPSRYR. The chain crosses the membrane as a helical span at residues 257–281; the sequence is FVRSVMSIIDVVAILPYYIGLVMTD. The Extracellular segment spans residues 282–287; sequence NEDVSG. The chain crosses the membrane as a helical; Voltage-sensor span at residues 288 to 307; the sequence is AFVTLRVFRVFRIFKFSRHS. Residues 308-321 are Cytoplasmic-facing; the sequence is QGLRILGYTLKSCA. An S4-S5 linker region spans residues 308–321; it reads QGLRILGYTLKSCA. The chain crosses the membrane as a helical span at residues 322 to 345; it reads SELGFLLFSLTMAIIIFATVMFYA. The Extracellular segment spans residues 346–357; it reads EKGSSASKFTSI. An intramembrane region (helical) is located at residues 358–369; it reads PAAFWYTIVTMT. The K(+) site is built by Thr-370, Leu-371, Gly-372, and Tyr-373. Positions 370–375 match the Selectivity filter motif; it reads TLGYGD. The stretch at 370-377 is an intramembrane region; it reads TLGYGDMV. Residues 378 to 380 are Extracellular-facing; the sequence is PKT. A helical membrane pass occupies residues 381-403; it reads IAGKIFGSICSLSGVLVIALPVP. Residues 404 to 630 lie on the Cytoplasmic side of the membrane; it reads VIVSNFSRIY…GGNIVRVSAL (227 aa). A required for dendritic targeting region spans residues 474–489; the sequence is FETQHHHLLHCLEKTT. The tract at residues 474-630 is important for normal channel activation and inactivation, for interaction with KCNIP2, and probably other family members as well; that stretch reads FETQHHHLLH…GGNIVRVSAL (157 aa). 4 positions are modified to phosphoserine: Ser-548, Ser-552, Ser-572, and Ser-575. A disordered region spans residues 600-622; that stretch reads IPTPPVTTPEGDDRPESPEYSGG. A phosphothreonine mark is found at Thr-602 and Thr-607. Ser-616 bears the Phosphoserine mark. Positions 627–630 match the PDZ-binding motif; the sequence is VSAL.

This sequence belongs to the potassium channel family. D (Shal) (TC 1.A.1.2) subfamily. Kv4.2/KCND2 sub-subfamily. As to quaternary structure, homotetramer or heterotetramer with KCND1 or KCND3. Associates with the regulatory subunits KCNIP2, KCNIP3 and KCNIP4. Interacts with the regulatory subunit KCNIP1; this interaction mediates the capture of both the N- and C-terminus of KCND2, preventing N-type inactivation and stabilizing the S6 conformation, thereby accelerating closed state inactivation and recovery. In vivo, probably exists as heteromeric complex containing variable proportions of KCND1, KCND2, KCND3, KCNIP1, KCNIP2, KCNIP3, KCNIP4, DPP6 and DPP10. The tetrameric channel can associate with up to four regulatory subunits, such as KCNIP2 or KCNIP4. Interaction with four KCNIP4 chains does not reduce interaction with DPP10. Interacts with DLG4 and NCS1/FREQ. Interacts with DLG1. Probably part of a complex consisting of KCNIP1, KCNIP2 isoform 3 and KCND2. Interacts with FLNA, FLNC and DPP10. Identified in a complex with cAMP-dependent protein kinase (PKA), CAV3, AKAP6 and KCND3 in cardiac myocytes. Interacts (via S1 and S2 helices) with DPP6; this interaction stabilizes the conformation of the S1-S2 helices and facilitates S4 conformational change, including S4 sliding up and down, thereby accelerating activation, inactivation, and recovery. Phosphorylation in response to MAPK activation is increased in stimulated dendrites. Interaction with KCNIP2 and DPP6 propomtes phosphorylation by PKA at Ser-552. Phosphorylation at Ser-552 has no effect on interaction with KCNIP3, but is required for the regulation of channel activity by KCNIP3. Phosphorylation at Ser-552 leads to KCND2 internalization. Phosphorylated by MAPK in response to signaling via the metabotropic glutamate receptor GRM5. Phosphorylation at Ser-616 is required for the down-regulation of neuronal A-type currents in response to signaling via GRM5.

The protein localises to the cell membrane. It localises to the cell projection. The protein resides in the dendrite. Its subcellular location is the synapse. It is found in the perikaryon. The protein localises to the postsynaptic cell membrane. It localises to the dendritic spine. The protein resides in the sarcolemma. Its subcellular location is the cell junction. It is found in the membrane. The protein localises to the caveola. The catalysed reaction is K(+)(in) = K(+)(out). In terms of biological role, voltage-gated potassium channel that mediates transmembrane potassium transport in excitable membranes, primarily in the brain, but also in rodent heart. Mediates the major part of the dendritic A-type current I(SA) in brain neurons. This current is activated at membrane potentials that are below the threshold for action potentials. It regulates neuronal excitability, prolongs the latency before the first spike in a series of action potentials, regulates the frequency of repetitive action potential firing, shortens the duration of action potentials and regulates the back-propagation of action potentials from the neuronal cell body to the dendrites. Contributes to the regulation of the circadian rhythm of action potential firing in suprachiasmatic nucleus neurons, which regulates the circadian rhythm of locomotor activity. Functions downstream of the metabotropic glutamate receptor GRM5 and plays a role in neuronal excitability and in nociception mediated by activation of GRM5. Mediates the transient outward current I(to) in rodent heart left ventricle apex cells, but not in human heart, where this current is mediated by another family member. Forms tetrameric potassium-selective channels through which potassium ions pass in accordance with their electrochemical gradient. The channel alternates between opened and closed conformations in response to the voltage difference across the membrane. Can form functional homotetrameric channels and heterotetrameric channels that contain variable proportions of KCND2 and KCND3; channel properties depend on the type of pore-forming alpha subunits that are part of the channel. In vivo, membranes probably contain a mixture of heteromeric potassium channel complexes. Interaction with specific isoforms of the regulatory subunits KCNIP1, KCNIP2, KCNIP3 or KCNIP4 strongly increases expression at the cell surface and thereby increases channel activity; it modulates the kinetics of channel activation and inactivation, shifts the threshold for channel activation to more negative voltage values, shifts the threshold for inactivation to less negative voltages and accelerates recovery after inactivation. Likewise, interaction with DPP6 or DPP10 promotes expression at the cell membrane and regulates both channel characteristics and activity. Upon depolarization, the channel goes from a resting closed state (C state) to an activated but non-conducting state (C* state), from there, the channel may either inactivate (I state) or open (O state). The protein is A-type voltage-gated potassium channel KCND2 of Mustela putorius furo (European domestic ferret).